A 340-amino-acid chain; its full sequence is MMKIVIDLMGADHGVLPIIEGVSRALENKSFSAVLVGDKDKATPFISKELASKVEMIHTQDYIKMEEAATEAIKRKESSIYLGMDILKNGADALISAGHSGATMGLATLRLGRIKGVERPAICTLMPSVGKRPSVLLDAGANTDCKPEYLIDFALMGYEYAKSVLHYDSPKVGLLSNGEEDIKGNMLVKETHKMLKAYDFFYGNVEGSDIFKGVVDVVVCDGFMGNVVLKTTEGVASAIGSIFKDEIKSSFKSKMGALMLRNAFDILKQKTDYAEYGGAPLLGVNKSVIISHGKSNARAVECAIYQAISAVESQVCLRITQAFESLKPSVSAHQSDQQDA.

This sequence belongs to the PlsX family. As to quaternary structure, homodimer. Probably interacts with PlsY.

It is found in the cytoplasm. It catalyses the reaction a fatty acyl-[ACP] + phosphate = an acyl phosphate + holo-[ACP]. The protein operates within lipid metabolism; phospholipid metabolism. Catalyzes the reversible formation of acyl-phosphate (acyl-PO(4)) from acyl-[acyl-carrier-protein] (acyl-ACP). This enzyme utilizes acyl-ACP as fatty acyl donor, but not acyl-CoA. The protein is Phosphate acyltransferase of Helicobacter pylori (strain HPAG1).